Reading from the N-terminus, the 227-residue chain is MTAIAPVITIDGPSGAGKGTLCKAMAEALQWHLLDSGAIYRVLALAALHHHVDVASEDALVPLASHLDVRFVSTNGNLEVILEGEDVSGEIRTQEVANAASQVAAFPRVREALLRRQRAFRELPGLIADGRDMGTVVFPDAPVKIFLDASSEERAHRRMLQLQEKGFSVNFERLLAEIKERDDRDRNRAVAPLVPAADALVLDSTTLSIEQLIEKALQYARQKLALA.

Residue 12–20 (GPSGAGKGT) coordinates ATP.

The protein belongs to the cytidylate kinase family. Type 1 subfamily.

The protein localises to the cytoplasm. It carries out the reaction CMP + ATP = CDP + ADP. It catalyses the reaction dCMP + ATP = dCDP + ADP. This Shigella flexneri protein is Cytidylate kinase.